A 76-amino-acid chain; its full sequence is Small ribosomal subunit protein bS16 (76 aa).

It belongs to the bacterial ribosomal protein bS16 family.

The protein is Small ribosomal subunit protein bS16 of Helicobacter acinonychis (strain Sheeba).